The primary structure comprises 137 residues: Phosphoribosyl-AMP cyclohydrolase (137 aa).

Asp-84 is a Mg(2+) binding site. Position 85 (Cys-85) interacts with Zn(2+). Mg(2+) contacts are provided by Asp-86 and Asp-88. 2 residues coordinate Zn(2+): Cys-101 and Cys-108.

This sequence belongs to the PRA-CH family. As to quaternary structure, homodimer. Mg(2+) serves as cofactor. Zn(2+) is required as a cofactor.

The protein resides in the cytoplasm. It carries out the reaction 1-(5-phospho-beta-D-ribosyl)-5'-AMP + H2O = 1-(5-phospho-beta-D-ribosyl)-5-[(5-phospho-beta-D-ribosylamino)methylideneamino]imidazole-4-carboxamide. The protein operates within amino-acid biosynthesis; L-histidine biosynthesis; L-histidine from 5-phospho-alpha-D-ribose 1-diphosphate: step 3/9. Catalyzes the hydrolysis of the adenine ring of phosphoribosyl-AMP. This Pelodictyon phaeoclathratiforme (strain DSM 5477 / BU-1) protein is Phosphoribosyl-AMP cyclohydrolase.